The sequence spans 454 residues: MSLEIVILAAGQGTRMRSALPKVLHPIAGKPMLGHVIDCARQLQPERIHVVIGHGADLVRERMAADDLNFVLQAEQLGTGHAVAQALPFLSAEQVLILYGDVPLIQLDTLQRLLAQVTPDQLSLLTVDMLDPTGYGRIVRDDQGAVQAIVEHKDATPAQRQIGEINTGILAVPGKRLADWLGRLSNDNAQGEYYLTDVIAMAVGDGLVVASAQPLDAMEVQGVNDRMQQAQLERHYQRLRAEELMRQGVTLLDPQRLDVRGEVSVGRDVLIDVNVVLEGRVVIEDDVRIGPNCVIRDSVLRRGAVIKANSHLEGAELGEGSDAGPFARLRPGSVLGARAHVGNFVELKNARLGEGSKAGHLSYLGDAELGANCNIGAGTITCNYDGANKFRTELGDDVFIGSNNSLVAPLKIGDGATTAAGSTITHEVPAKNLAFGRARQKNLENWKRPEKIRK.

Residues 1 to 226 (MSLEIVILAA…AMEVQGVNDR (226 aa)) form a pyrophosphorylase region. Residues 8 to 11 (LAAG), Lys-22, Gln-73, 78 to 79 (GT), 99 to 101 (YGD), Gly-136, Glu-151, Asn-166, and Asn-224 contribute to the UDP-N-acetyl-alpha-D-glucosamine site. A Mg(2+)-binding site is contributed by Asp-101. Asn-224 lines the Mg(2+) pocket. Positions 227–247 (MQQAQLERHYQRLRAEELMRQ) are linker. Residues 248-454 (GVTLLDPQRL…NWKRPEKIRK (207 aa)) form an N-acetyltransferase region. Residues Arg-330 and Lys-348 each contribute to the UDP-N-acetyl-alpha-D-glucosamine site. His-360 serves as the catalytic Proton acceptor. Residues Tyr-363 and Asn-374 each contribute to the UDP-N-acetyl-alpha-D-glucosamine site. Residues Ala-377, 383 to 384 (NY), Ser-402, Ala-420, and Arg-437 each bind acetyl-CoA.

In the N-terminal section; belongs to the N-acetylglucosamine-1-phosphate uridyltransferase family. The protein in the C-terminal section; belongs to the transferase hexapeptide repeat family. In terms of assembly, homotrimer. Mg(2+) serves as cofactor.

The protein localises to the cytoplasm. It catalyses the reaction alpha-D-glucosamine 1-phosphate + acetyl-CoA = N-acetyl-alpha-D-glucosamine 1-phosphate + CoA + H(+). The catalysed reaction is N-acetyl-alpha-D-glucosamine 1-phosphate + UTP + H(+) = UDP-N-acetyl-alpha-D-glucosamine + diphosphate. It functions in the pathway nucleotide-sugar biosynthesis; UDP-N-acetyl-alpha-D-glucosamine biosynthesis; N-acetyl-alpha-D-glucosamine 1-phosphate from alpha-D-glucosamine 6-phosphate (route II): step 2/2. Its pathway is nucleotide-sugar biosynthesis; UDP-N-acetyl-alpha-D-glucosamine biosynthesis; UDP-N-acetyl-alpha-D-glucosamine from N-acetyl-alpha-D-glucosamine 1-phosphate: step 1/1. The protein operates within bacterial outer membrane biogenesis; LPS lipid A biosynthesis. Catalyzes the last two sequential reactions in the de novo biosynthetic pathway for UDP-N-acetylglucosamine (UDP-GlcNAc). The C-terminal domain catalyzes the transfer of acetyl group from acetyl coenzyme A to glucosamine-1-phosphate (GlcN-1-P) to produce N-acetylglucosamine-1-phosphate (GlcNAc-1-P), which is converted into UDP-GlcNAc by the transfer of uridine 5-monophosphate (from uridine 5-triphosphate), a reaction catalyzed by the N-terminal domain. This Pseudomonas paraeruginosa (strain DSM 24068 / PA7) (Pseudomonas aeruginosa (strain PA7)) protein is Bifunctional protein GlmU.